Consider the following 296-residue polypeptide: tRNA (guanine(9)-N1)-methyltransferase (296 aa).

Residues 1 to 33 form a disordered region; the sequence is MTPETNNDETLSRPKPRAALPPVPEGMSKSQWK. The SAM-dependent MTase TRM10-type domain maps to 85 to 274; that stretch reads TPRVNVNQKD…SVLPARKLAE (190 aa). Residues 181 to 182, G201, 205 to 209, C213, L227, and 239 to 241 contribute to the S-adenosyl-L-methionine site; these read LT, DKNRH, and KVL. D205 serves as the catalytic Proton acceptor. The interval 277-296 is disordered; the sequence is DHAQESNSSSPAEEQDAQDI.

Belongs to the class IV-like SAM-binding methyltransferase superfamily. TRM10 family. As to quaternary structure, monomer.

It localises to the cytoplasm. It is found in the nucleus. It catalyses the reaction guanosine(9) in tRNA + S-adenosyl-L-methionine = N(1)-methylguanosine(9) in tRNA + S-adenosyl-L-homocysteine + H(+). Its function is as follows. S-adenosyl-L-methionine-dependent guanine N(1)-methyltransferase that catalyzes the formation of N(1)-methylguanine at position 9 (m1G9) in cytoplasmic tRNA. The sequence is that of tRNA (guanine(9)-N1)-methyltransferase from Eremothecium gossypii (strain ATCC 10895 / CBS 109.51 / FGSC 9923 / NRRL Y-1056) (Yeast).